The sequence spans 564 residues: E3 ubiquitin-protein ligase hrd-like protein 1 (564 aa).

The chain crosses the membrane as a helical span at residues 17-37 (SYLALSVLVAIVASVTVFTTF). N-linked (GlcNAc...) asparagine glycosylation occurs at asparagine 53. 7 helical membrane passes run 61-81 (YGLNIEALSGHTFFQIAHYIL), 86-106 (LIWVAINSYFAILAVCTRLII), 123-143 (QAFFCYVLLTIVYLSVVIGPQ), 148-168 (VMPWMIWGGICAFLSHLQFIT), 185-205 (KISFLSLFLFFVSIAMTFLIS), 215-235 (PAVLLYFDCLLAVFRSTYILF), and 272-292 (LSFAQLLAFSPGLNLTSIFFL). The RING-type; atypical zinc finger occupies 335-373 (CVVCWELLGTSRRLPCSHQFHDWCLMWWLAQDSSCPTCR). Residues 432–474 (QLQTMLEQVREMFPQMSVDIIMTDLRQSGSAQSTIENILEGRI) enclose the CUE domain.

Its subcellular location is the membrane. Its function is as follows. Proposed to have a role in neuroprotection. The protein is E3 ubiquitin-protein ligase hrd-like protein 1 (hrdl-1) of Caenorhabditis elegans.